A 287-amino-acid polypeptide reads, in one-letter code: MAQKFVPEAAELCENSLKKFISLIGTVDKLLVISGAGISTESGIPDYRSKDVGLYARIAHKPIYFQDYMRSNRCRQRYWSRNFLAWPRFGQAAPNINHYALSKWEASDRFQWLITQNVDGLHLKAGSKMVTELHGSALQVKCTTCDYIESRQTYQDRLDYANPGFKEEHVAPGELAPDGDIILPLGTEKGFQIPECPSCGGLMKTDVTFFGENVNMDKVNFCYEKVNECDGILSLGTSLAVLSGFRFIHHANMKKKPIFIVNIGPTRADHMATMKLDYKISDVLKEM.

One can recognise a Deacetylase sirtuin-type domain in the interval 10 to 287 (AELCENSLKK…YKISDVLKEM (278 aa)). NAD(+) contacts are provided by residues 35–55 (GAGISTESGIPDYRSKDVGLY) and 116–119 (QNVD). The Proton acceptor role is filled by His134. Residues Cys142, Cys145, Cys196, and Cys199 each coordinate Zn(2+). NAD(+)-binding positions include 236 to 238 (GTS), 262 to 264 (NIG), and Ile280.

It belongs to the sirtuin family. Class II subfamily. Interacts with pyc-1, pcca-1 and mccc-1. Requires Zn(2+) as cofactor. In terms of tissue distribution, ubiquitously expressed with high expression in the pharynx, body wall muscles and gonad.

The protein resides in the mitochondrion matrix. The protein localises to the mitochondrion. The enzyme catalyses N(6)-acetyl-L-lysyl-[protein] + NAD(+) + H2O = 2''-O-acetyl-ADP-D-ribose + nicotinamide + L-lysyl-[protein]. Functionally, NAD-dependent protein deacylase. Catalyzes the NAD-dependent hydrolysis of acyl groups from lysine residues. Plays a role in oxidative stress resistance. This is NAD-dependent protein deacylase sir-2.2 (sir-2.2) from Caenorhabditis elegans.